The primary structure comprises 498 residues: RuvB-like helicase 2 (498 aa).

Residue 79–86 (GPPSTGKT) participates in ATP binding. Residues 458 to 498 (VTIGQESTDGSTQPQAKQQEVAQPEATQPQSQPEDDKMETD) form a disordered region. Polar residues predominate over residues 461–489 (GQESTDGSTQPQAKQQEVAQPEATQPQSQ).

The protein belongs to the RuvB family. As to quaternary structure, may form heterododecamers with RVB1. Component of the SWR1 chromatin remodeling complex, the INO80 chromatin remodeling complex, and of the R2TP complex.

The protein localises to the nucleus. The catalysed reaction is ATP + H2O = ADP + phosphate + H(+). Its function is as follows. DNA helicase which participates in several chromatin remodeling complexes, including the SWR1 and the INO80 complexes. The SWR1 complex mediates the ATP-dependent exchange of histone H2A for the H2A variant HZT1 leading to transcriptional regulation of selected genes by chromatin remodeling. The INO80 complex remodels chromatin by shifting nucleosomes and is involved in DNA repair. Also involved in pre-rRNA processing. This Candida albicans (strain SC5314 / ATCC MYA-2876) (Yeast) protein is RuvB-like helicase 2 (RVB2).